A 5263-amino-acid chain; its full sequence is Fibroin heavy chain (5263 aa).

An N-terminal signal peptide occupies residues 1-21; it reads MRVKTFVILCCALQYVAYTNA. A highly repetitive region spans residues 149–5206; sequence AAVGAGAGAG…GSGAGAGGSV (5058 aa). A disulfide bridge connects residues cysteine 5260 and cysteine 5263.

In terms of assembly, silk fibroin elementary unit consists in a disulfide-linked heavy and light chain and a p25 glycoprotein in molar ratios of 6:6:1. This results in a complex of approximately 2.3 MDa. The interchain disulfide bridge is essential for the intracellular transport and secretion of fibroin. As to expression, produced exclusively in the posterior (PSG) section of silk glands, which are essentially modified salivary glands.

In terms of biological role, core component of the silk filament; a strong, insoluble and chemically inert fiber. In Bombyx mori (Silk moth), this protein is Fibroin heavy chain (FIBH).